Here is a 95-residue protein sequence, read N- to C-terminus: Protein TusB (95 aa).

Belongs to the DsrH/TusB family. As to quaternary structure, heterohexamer, formed by a dimer of trimers. The hexameric TusBCD complex contains 2 copies each of TusB, TusC and TusD. The TusBCD complex interacts with TusE.

Its subcellular location is the cytoplasm. Functionally, part of a sulfur-relay system required for 2-thiolation of 5-methylaminomethyl-2-thiouridine (mnm(5)s(2)U) at tRNA wobble positions. The protein is Protein TusB of Enterobacter sp. (strain 638).